A 313-amino-acid chain; its full sequence is Lactamase-like protein nscB (313 aa).

The Zn(2+) site is built by His-97, His-99, Asp-101, and His-102. Asp-101 acts as the Proton donor/acceptor in catalysis.

It belongs to the metallo-beta-lactamase superfamily. Zn(2+) is required as a cofactor.

It participates in secondary metabolite biosynthesis. In terms of biological role, lactamase-like protein; part of the gene cluster that mediates the biosynthesis of neosartoricin B, a prenylated anthracenone that probably exhibits T-cell antiproliferative activity, suggestive of a physiological role as an immunosuppressive agent. The non-reducing polyketide synthase nscA probably synthesizes and cyclizes the decaketide backbone. The hydrolase nscB then mediates the product release through hydrolysis followed by spontaneous decarboxylation. The prenyltransferase nscD catalyzes the addition of the dimethylallyl group to the aromatic C5. The FAD-dependent monooxygenase nscC is then responsible for the stereospecific hydroxylation at C2. Neosartoricin B can be converted into two additional compounds neosartoricins C and D. Neosartoricin C is a spirocyclic compound that is cyclized through the attack of C3 hydroxyl on C14, followed by dehydration. On the other hand, neosartoricin D is a further cyclized compound in which attack of C2 on C14 in neosartoricin C results in the formation of the acetal-containing dioxabicyclo-octanone ring. Both of these compounds are novel and possibly represent related metabolites of the gene cluster. The protein is Lactamase-like protein nscB of Arthroderma gypseum (strain ATCC MYA-4604 / CBS 118893) (Microsporum gypseum).